The primary structure comprises 87 residues: U3-theraphotoxin-Hhn1e (87 aa).

Positions 1–24 (MVNMKASMFLTFAGLVLLFVVCYA) are cleaved as a signal peptide. The propeptide occupies 25–52 (SESEEKEFPKGMLSSIFAVDNDFKQEER). Disulfide bonds link C54–C67, C61–C72, and C66–C79.

Belongs to the neurotoxin 10 (Hwtx-1) family. 51 (Hntx-8) subfamily. Hntx-8 sub-subfamily. Expressed by the venom gland.

It localises to the secreted. In terms of biological role, ion channel inhibitor. The protein is U3-theraphotoxin-Hhn1e of Cyriopagopus hainanus (Chinese bird spider).